The chain runs to 184 residues: Peptide deformylase (184 aa).

2 residues coordinate Fe cation: C111 and H154. Residue E155 is part of the active site. Residue H158 participates in Fe cation binding.

It belongs to the polypeptide deformylase family. The cofactor is Fe(2+).

The catalysed reaction is N-terminal N-formyl-L-methionyl-[peptide] + H2O = N-terminal L-methionyl-[peptide] + formate. In terms of biological role, removes the formyl group from the N-terminal Met of newly synthesized proteins. Requires at least a dipeptide for an efficient rate of reaction. N-terminal L-methionine is a prerequisite for activity but the enzyme has broad specificity at other positions. The sequence is that of Peptide deformylase from Lacticaseibacillus casei (strain BL23) (Lactobacillus casei).